Consider the following 101-residue polypeptide: Small ribosomal subunit protein uS14 (101 aa).

The protein belongs to the universal ribosomal protein uS14 family. Part of the 30S ribosomal subunit. Contacts proteins S3 and S10.

In terms of biological role, binds 16S rRNA, required for the assembly of 30S particles and may also be responsible for determining the conformation of the 16S rRNA at the A site. In Paraburkholderia phytofirmans (strain DSM 17436 / LMG 22146 / PsJN) (Burkholderia phytofirmans), this protein is Small ribosomal subunit protein uS14.